The following is a 256-amino-acid chain: Ribonuclease 3-like protein 1 (256 aa).

Residues A22–K168 form the RNase III domain. The Mg(2+) site is built by E65, D154, and E157.

It depends on Mg(2+) as a cofactor. The cofactor is Mn(2+).

In terms of biological role, cleaves double-stranded RNA (dsRNA). In Oryza sativa subsp. japonica (Rice), this protein is Ribonuclease 3-like protein 1.